Consider the following 252-residue polypeptide: Transmembrane ascorbate-dependent reductase CYB561 (252 aa).

The residue at position 1 (Met1) is an N-acetylmethionine. The Cytoplasmic portion of the chain corresponds to 1–17 (MEGPASPARAPGALPYY). A helical transmembrane segment spans residues 18 to 38 (VAFSQLLGLIVVAMTGAWLGM). A Cytochrome b561 domain is found at 20–221 (FSQLLGLIVV…FATVILYILT (202 aa)). The Vesicular segment spans residues 39–52 (YRGGIAWESALQFN). Residues 53 to 73 (VHPLCMIIGLVFLQGDALLVY) traverse the membrane as a helical segment. Heme b contacts are provided by His54, Arg74, and Lys81. Topologically, residues 74 to 86 (RVFRNEAKRTTKV) are cytoplasmic. Lys81 and Lys85 together coordinate L-ascorbate. The chain crosses the membrane as a helical span at residues 87 to 107 (LHGLLHVFAFVIALVGLVAVF). Residues His88, 117-120 (DLYS), and His122 contribute to the heme b site. The Vesicular segment spans residues 108–125 (EHHRKKGYADLYSLHSWC). A helical transmembrane segment spans residues 126–146 (GILVFALFFAQWLVGFSFFLF). Over 147–159 (PGASFSLRSRYRP) the chain is Cytoplasmic. Arg154 provides a ligand contact to L-ascorbate. A helical transmembrane segment spans residues 160–180 (QHVFFGAAIFLLSVATALLGL). Residues His161 and Glu182 each coordinate heme b. Topologically, residues 181–199 (KEALLFELGTKYSMFEPEG) are vesicular. The helical transmembrane segment at 200–220 (VLANVLGLLLATFATVILYIL) threads the bilayer. Residues 221-252 (TRADWKRPLQAEEQALSMDFKTLTEGDSPSSQ) lie on the Cytoplasmic side of the membrane. Lys226 lines the heme b pocket. A phosphoserine mark is found at Ser248 and Ser250.

The cofactor is heme b. As to expression, expressed in the adrenal medulla and all brain regions, but not in visceral organs.

The protein resides in the cytoplasmic vesicle. The protein localises to the secretory vesicle. It is found in the chromaffin granule membrane. The catalysed reaction is monodehydro-L-ascorbate radical(out) + L-ascorbate(in) = monodehydro-L-ascorbate radical(in) + L-ascorbate(out). Its function is as follows. Transmembrane reductase that uses ascorbate as an electron donor in the cytoplasm and transfers electrons across membranes to reduce monodehydro-L-ascorbate radical in the lumen of secretory vesicles. It is therefore involved the regeneration and homeostasis within secretory vesicles of ascorbate which in turn provides reducing equivalents needed to support the activity of intravesicular enzymes. This Bos taurus (Bovine) protein is Transmembrane ascorbate-dependent reductase CYB561 (CYB561).